Consider the following 73-residue polypeptide: Putative defensin-like protein 270 (73 aa).

The N-terminal stretch at 1–23 is a signal peptide; sequence MMSSKSHFVALLLIIFLIVNVQS. Disulfide bonds link cysteine 33/cysteine 72, cysteine 39/cysteine 60, cysteine 45/cysteine 70, and cysteine 49/cysteine 71.

It belongs to the DEFL family.

It is found in the secreted. This Arabidopsis thaliana (Mouse-ear cress) protein is Putative defensin-like protein 270.